Consider the following 289-residue polypeptide: tRNA (adenine(58)-N(1))-methyltransferase catalytic subunit TRMT61A (289 aa).

The residue at position 2 (Ser-2) is an N-acetylserine. Residues 20–22 (LGH), 35–42 (QTQTRHGV), 64–65 (GW), 85–89 (QILYS), and 110–117 (SGTGSGSV) contribute to the substrate site. S-adenosyl-L-methionine contacts are provided by residues Leu-87, 114 to 116 (SGS), Glu-135, Arg-140, 163 to 164 (DV), and Asp-181. Substrate-binding positions include 180-183 (LDIP) and 205-212 (SFSPCIEQ). A disordered region spans residues 245–272 (LPPPDLGTGTDGPAGSDTSPFRSGTPMK). Positions 250–259 (LGTGTDGPAG) are enriched in low complexity. Ser-263 is subject to Phosphoserine. Position 278 (Thr-278) interacts with substrate.

This sequence belongs to the class I-like SAM-binding methyltransferase superfamily. TRM61 family. As to quaternary structure, heterotetramer; composed of two copies of TRMT6 and two copies of TRMT61A.

It is found in the nucleus. It catalyses the reaction adenosine(58) in tRNA + S-adenosyl-L-methionine = N(1)-methyladenosine(58) in tRNA + S-adenosyl-L-homocysteine + H(+). It carries out the reaction an adenosine in mRNA + S-adenosyl-L-methionine = an N(1)-methyladenosine in mRNA + S-adenosyl-L-homocysteine + H(+). Catalytic subunit of tRNA (adenine-N(1)-)-methyltransferase, which catalyzes the formation of N(1)-methyladenine at position 58 (m1A58) in initiator methionyl-tRNA. Catalytic subunit of mRNA N(1)-methyltransferase complex, which mediates methylation of adenosine residues at the N(1) position of a small subset of mRNAs: N(1) methylation takes place in tRNA T-loop-like structures of mRNAs and is only present at low stoichiometries. This is tRNA (adenine(58)-N(1))-methyltransferase catalytic subunit TRMT61A (TRMT61A) from Homo sapiens (Human).